The sequence spans 293 residues: Immediate early response gene 5-like protein (293 aa).

The protein belongs to the IER family.

The chain is Immediate early response gene 5-like protein (ier5l) from Xenopus laevis (African clawed frog).